The chain runs to 305 residues: Heme A synthase (305 aa).

Over methionine 1–lysine 6 the chain is Cytoplasmic. The chain crosses the membrane as a helical span at residues valine 7–threonine 27. Topologically, residues lysine 28–arginine 63 are extracellular. Cysteine 35 and cysteine 42 form a disulfide bridge. Residue glutamate 59 is part of the active site. Histidine 62 is a binding site for heme o. A helical transmembrane segment spans residues methionine 64–methionine 84. Topologically, residues lysine 85–proline 92 are cytoplasmic. The helical transmembrane segment at leucine 93–valine 113 threads the bilayer. The Extracellular portion of the chain corresponds to tryptophan 114–alanine 122. A helical transmembrane segment spans residues leucine 123–phenylalanine 143. Histidine 124 is a heme o binding site. The Cytoplasmic portion of the chain corresponds to glutamate 144–leucine 160. Residues arginine 161–valine 181 traverse the membrane as a helical segment. Topologically, residues arginine 182 to tyrosine 212 are extracellular. Residues phenylalanine 213–phenylalanine 233 traverse the membrane as a helical segment. Histidine 214 lines the heme b pocket. The Cytoplasmic segment spans residues arginine 234–arginine 240. The chain crosses the membrane as a helical span at residues valine 241–alanine 261. The Extracellular segment spans residues leucine 262–tyrosine 271. A helical membrane pass occupies residues isoleucine 272–leucine 292. Histidine 276 is a heme b binding site. The Cytoplasmic segment spans residues leucine 293–lysine 305.

This sequence belongs to the COX15/CtaA family. Type 1 subfamily. As to quaternary structure, interacts with CtaB. Requires heme b as cofactor.

Its subcellular location is the cell membrane. The catalysed reaction is Fe(II)-heme o + 2 A + H2O = Fe(II)-heme a + 2 AH2. It participates in porphyrin-containing compound metabolism; heme A biosynthesis; heme A from heme O: step 1/1. Catalyzes the conversion of heme O to heme A by two successive hydroxylations of the methyl group at C8. The first hydroxylation forms heme I, the second hydroxylation results in an unstable dihydroxymethyl group, which spontaneously dehydrates, resulting in the formyl group of heme A. In Listeria monocytogenes serotype 4b (strain F2365), this protein is Heme A synthase.